We begin with the raw amino-acid sequence, 308 residues long: Olfactory receptor 4N5 (308 aa).

Residues 1–25 lie on the Extracellular side of the membrane; it reads METQNLTVVTEFILLGLTQSQDAQL. N-linked (GlcNAc...) asparagine glycosylation occurs at asparagine 5. A helical transmembrane segment spans residues 26 to 49; that stretch reads LVFVLVLIFYLIILPGNFLIIFTI. The Cytoplasmic segment spans residues 50-57; that stretch reads KSDPGLTA. A helical membrane pass occupies residues 58-79; it reads PLYFFLGNLALLDASYSFIVVP. Residues 80-100 are Extracellular-facing; it reads RMLVDFLSEKKVISYRSCITQ. A disulfide bridge connects residues cysteine 97 and cysteine 189. The chain crosses the membrane as a helical span at residues 101–120; sequence LFFLHFLGAGEMFLLVVMAF. Residues 121–139 lie on the Cytoplasmic side of the membrane; sequence DRYIAICRPLHYSTIMNPR. Residues 140–158 form a helical membrane-spanning segment; it reads ACYALSLVLWLGGFIHSIV. Residues 159 to 195 are Extracellular-facing; sequence QVALILHLPFCGPNQLDNFFCDVPQVIKLACTNTFVV. Residues 196–219 traverse the membrane as a helical segment; sequence ELLMVSNSGLLSLLCFLGLLASYA. The Cytoplasmic segment spans residues 220–235; that stretch reads VILCRIREHSSEGKSK. A helical membrane pass occupies residues 236–258; the sequence is AISTCTTHIIIIFLMFGPAIFIY. The Extracellular segment spans residues 259–269; that stretch reads TCPFQAFPADK. A helical transmembrane segment spans residues 270–289; that stretch reads VVSLFHTVIFPLMNPVIYTL. Over 290 to 308 the chain is Cytoplasmic; the sequence is RNQEVKASMRKLLSQHMFC.

The protein belongs to the G-protein coupled receptor 1 family.

Its subcellular location is the cell membrane. Functionally, odorant receptor. The sequence is that of Olfactory receptor 4N5 (OR4N5) from Homo sapiens (Human).